We begin with the raw amino-acid sequence, 674 residues long: MESSASSPPLTQSDPLEAFPRRTLEAGDIAVLVLYFLFVLAVGLWSTVKTKRDTVKGYFLAGGNMLWWPVGASLFASNVGSGHFVGLAGSGAAAGLSVTAYELNGLFFVLMLSWIFLPIYITGQVTTMPEYLRKRFGGNRIPIILAVLYLFIYIFTKISVDMYAGAIFIQQSLHVNLYLAIVGLLAVTALYTIAGGLAAVIYTDALQTLIMLIGALILMGYSFAAVGGLEGLEEKYFLAMASNRSGNSSCGLPREDAFHIFRDPVTSDLPWPGILFGMSIPSLWYWCTDQVIVQRTLAAKNLSHAKGGSLMAAYLKVLPLFIMVFPGMVSRVLFPDEVACADPEICRKVCSNPAGCSDIAYPKLVLELLPTGLRGLMMAVMVAALTSSLTSIFNSASTIFTMDLWNHLRPRASEKELMIVGRVFVLLLVLVSILWIPVVQASQGGQLFIYIQSISSYLQPPVAVVFIMGCFWKRANEKGAFFGLVLGLLLGLVRLILDFIYVQPRCDQLDERPAVVKDVHYLYFSMILSSVTLITVCAVSWFTEPPSKEMVSRLTWFTRHDPVVQKEQVPSATPPPLTLSQNGTPEASGTNTQFEMVQENLSKTHSCDMTTKRSKVVKAILWLCGVENKGKEQAPSRADPIIVSLEENPLVKTLLDLNLIICISCAIFLWGYFA.

Residues 1 to 25 (MESSASSPPLTQSDPLEAFPRRTLE) lie on the Extracellular side of the membrane. The chain crosses the membrane as a helical span at residues 26 to 46 (AGDIAVLVLYFLFVLAVGLWS). Residues 47–56 (TVKTKRDTVK) are Cytoplasmic-facing. A helical transmembrane segment spans residues 57 to 77 (GYFLAGGNMLWWPVGASLFAS). At 78-102 (NVGSGHFVGLAGSGAAAGLSVTAYE) the chain is on the extracellular side. A helical transmembrane segment spans residues 103–123 (LNGLFFVLMLSWIFLPIYITG). Residues 124 to 140 (QVTTMPEYLRKRFGGNR) lie on the Cytoplasmic side of the membrane. Residues 141 to 161 (IPIILAVLYLFIYIFTKISVD) traverse the membrane as a helical segment. The Extracellular segment spans residues 162 to 180 (MYAGAIFIQQSLHVNLYLA). A helical transmembrane segment spans residues 181-201 (IVGLLAVTALYTIAGGLAAVI). Topologically, residues 202 to 208 (YTDALQT) are cytoplasmic. The helical transmembrane segment at 209-229 (LIMLIGALILMGYSFAAVGGL) threads the bilayer. The Extracellular portion of the chain corresponds to 230–272 (EGLEEKYFLAMASNRSGNSSCGLPREDAFHIFRDPVTSDLPWP). A helical membrane pass occupies residues 273–293 (GILFGMSIPSLWYWCTDQVIV). Over 294 to 308 (QRTLAAKNLSHAKGG) the chain is Cytoplasmic. The helical transmembrane segment at 309–329 (SLMAAYLKVLPLFIMVFPGMV) threads the bilayer. Residues 330–374 (SRVLFPDEVACADPEICRKVCSNPAGCSDIAYPKLVLELLPTGLR) are Extracellular-facing. A helical membrane pass occupies residues 375–397 (GLMMAVMVAALTSSLTSIFNSAS). Topologically, residues 398 to 418 (TIFTMDLWNHLRPRASEKELM) are cytoplasmic. Residues 419–439 (IVGRVFVLLLVLVSILWIPVV) form a helical membrane-spanning segment. Over 440 to 446 (QASQGGQ) the chain is Extracellular. Residues 447-467 (LFIYIQSISSYLQPPVAVVFI) traverse the membrane as a helical segment. Topologically, residues 468–479 (MGCFWKRANEKG) are cytoplasmic. A helical transmembrane segment spans residues 480–500 (AFFGLVLGLLLGLVRLILDFI). Topologically, residues 501–521 (YVQPRCDQLDERPAVVKDVHY) are extracellular. The helical transmembrane segment at 522–542 (LYFSMILSSVTLITVCAVSWF) threads the bilayer. Residues 543 to 653 (TEPPSKEMVS…SLEENPLVKT (111 aa)) lie on the Cytoplasmic side of the membrane. The segment at 567–589 (EQVPSATPPPLTLSQNGTPEASG) is disordered. The span at 578–589 (TLSQNGTPEASG) shows a compositional bias: polar residues. The helical transmembrane segment at 654–674 (LLDLNLIICISCAIFLWGYFA) threads the bilayer.

It belongs to the sodium:solute symporter (SSF) (TC 2.A.21) family.

It localises to the membrane. Its subcellular location is the apical cell membrane. The enzyme catalyses myo-inositol(out) + 2 Na(+)(out) = myo-inositol(in) + 2 Na(+)(in). It catalyses the reaction 1D-chiro-inositol(out) + 2 Na(+)(out) = 1D-chiro-inositol(in) + 2 Na(+)(in). The catalysed reaction is D-glucose(out) + 2 Na(+)(out) = D-glucose(in) + 2 Na(+)(in). It carries out the reaction D-xylose(out) + 2 Na(+)(out) = D-xylose(in) + 2 Na(+)(in). MI transport activity inhibited by D-chiro-inositol (DCI), phlorizin (Pz) and sodium (Na(+)). Insulin increases D-chiro-inositol uptake. In terms of biological role, involved in the sodium-dependent cotransport of myo-inositol (MI) with a Na(+):MI stoichiometry of 2:1. Exclusively responsible for apical MI transport and absorption in intestine. Can also transport D-chiro-inositol (DCI) but not L-fucose. Exhibits stereospecific cotransport of both D-glucose and D-xylose. May induce apoptosis through the TNF-alpha, PDCD1 pathway. May play a role in the regulation of MI concentration in serum, involving reabsorption in at least the proximal tubule of the kidney. The sequence is that of Sodium/myo-inositol cotransporter 2 from Bos taurus (Bovine).